A 561-amino-acid polypeptide reads, in one-letter code: Interleukin-1 receptor-like 2 (561 aa).

A signal peptide spans Met1–Ala21. 3 consecutive Ig-like C2-type domains span residues Gly22–Thr113, Ser128–Tyr215, and Ser225–Ala321. Topologically, residues Gly22–Arg338 are extracellular. Residues Asn23, Asn43, Asn55, Asn111, and Asn130 are each glycosylated (N-linked (GlcNAc...) asparagine). Cysteines 44 and 97 form a disulfide. Cys149 and Cys199 are joined by a disulfide. N-linked (GlcNAc...) asparagine glycosylation is found at Asn231, Asn237, Asn253, Asn269, Asn290, and Asn302. An intrachain disulfide couples Cys252 to Cys319. The chain crosses the membrane as a helical span at residues Ala339 to Ile358. At Tyr359 to Gly561 the chain is on the cytoplasmic side. The region spanning Lys384–Met539 is the TIR domain. Glu470 is a catalytic residue.

The protein belongs to the interleukin-1 receptor family. In terms of assembly, interacts with IL1RAP; the association is enhanced by IL36B indicative for an functional signaling complex and inhibited by IL36RN. In terms of tissue distribution, predominant expression in the lung and epididymis, with lower expression in cerebral cortex and testis. Expression in the brain is non-neuronal and associated with the cerebral vasculature. Not detected in any cell line tested.

It localises to the membrane. It catalyses the reaction NAD(+) + H2O = ADP-D-ribose + nicotinamide + H(+). Its function is as follows. Receptor for interleukin-36 (IL36A, IL36B and IL36G). After binding to interleukin-36 associates with the coreceptor IL1RAP to form the interleukin-36 receptor complex which mediates interleukin-36-dependent activation of NF-kappa-B, MAPK and other pathways. The IL-36 signaling system is thought to be present in epithelial barriers and to take part in local inflammatory response; it is similar to the IL-1 system. Seems to be involved in skin inflammatory response by induction of the IL-23/IL-17/IL-22 pathway. Receptor for the interleukin IL36G. Binding to the agonist leads to the activation of NF-kappa-B. In Rattus norvegicus (Rat), this protein is Interleukin-1 receptor-like 2 (Il1rl2).